A 108-amino-acid polypeptide reads, in one-letter code: Putative septation protein SpoVG (108 aa).

The interval 84 to 108 is disordered; the sequence is FEKQSSVETEPVTEENMETAENENE. Residues 94–108 show a composition bias toward acidic residues; that stretch reads PVTEENMETAENENE.

It belongs to the SpoVG family.

In terms of biological role, could be involved in septation. In Finegoldia magna (strain ATCC 29328 / DSM 20472 / WAL 2508) (Peptostreptococcus magnus), this protein is Putative septation protein SpoVG.